A 338-amino-acid polypeptide reads, in one-letter code: UPF0324 membrane protein HI_1643 (338 aa).

The next 10 helical transmembrane spans lie at 5–23 (PFYF…ANYL), 33–55 (HISA…YPQF), 62–84 (GVLF…RLTF), 94–116 (AVVT…GIRY), 123–145 (LVYL…AEPV), 155–177 (VAIA…FYTW), 222–239 (LRVM…WLLT), 254–273 (IPWF…FDLL), 280–302 (LFVE…TTQA), and 312–334 (PLVL…NYGI).

It belongs to the UPF0324 family.

The protein resides in the cell membrane. This is UPF0324 membrane protein HI_1643 from Haemophilus influenzae (strain ATCC 51907 / DSM 11121 / KW20 / Rd).